We begin with the raw amino-acid sequence, 762 residues long: 1-phosphatidylinositol 4,5-bisphosphate phosphodiesterase delta-4 (762 aa).

In terms of domain architecture, PH spans 16–124 (LLMQEGMPMR…WMRGLQLLVD (109 aa)). A substrate binding region spans residues 26–53 (KVRSKSWKKLRYFRLQNDGMTVWHARQA). 3 EF-hand domains span residues 134 to 169 (RLDQWLSDWFQRGDKNQDGKMSFQEVQRLLHLMNVE), 170 to 205 (MDQEYAFSLFQAADTSQSGTLEGEEFVQFYKALTKR), and 206 to 237 (AEVQELFESFSADGQKLTLLEFLDFLQEEQKE). D147, N149, D151, K153, E158, D183, S185, S187, T189, and E194 together coordinate Ca(2+). Positions 213–243 (ESFSADGQKLTLLEFLDFLQEEQKERDCTSE) match the GBA motif. The region spanning 290-435 (QDMTQPLNHY…LRRKILVKGK (146 aa)) is the PI-PLC X-box domain. H305 is a catalytic residue. Ca(2+)-binding residues include N306, E335, and D337. Residue H350 is part of the active site. Residue E384 coordinates Ca(2+). Substrate is bound by residues K433 and K435. Positions 443 to 471 (LEYEEEEAEPELEESELALESQFETEPEP) are enriched in acidic residues. Residues 443-483 (LEYEEEEAEPELEESELALESQFETEPEPQEQNLQNKDKKK) are disordered. S457 carries the post-translational modification Phosphoserine. Residues 493 to 609 (LSSLVIYLKS…GYVLKPDFLR (117 aa)) enclose the PI-PLC Y-box domain. The substrate site is built by S522 and R549. A C2 domain is found at 609–736 (RDIQSSFHPE…QGYRHIHLLS (128 aa)). I650, D652, N676, D705, Y706, and D707 together coordinate Ca(2+). Residues 731 to 734 (HIHL) carry the PDZ-binding motif.

As to quaternary structure, interacts with GRIP1. In terms of assembly, interacts (via GBA motif) with guanine nucleotide-binding protein G(i) alpha subunit GNAI3 (inactive GDP-bound form); high-affinity interaction. Interacts (via GBA motif) with guanine nucleotide-binding protein G(i) alpha subunit GNAI3 (inactive GDP-bound form); low-affinity interaction. The cofactor is Ca(2+). In terms of tissue distribution, highly expressed in skeletal muscle and kidney tissues, and at moderate level in intestinal tissue. Expressed in corneal epithelial cells.

It localises to the membrane. The protein localises to the nucleus. Its subcellular location is the cytoplasm. The protein resides in the endoplasmic reticulum. The enzyme catalyses a 1,2-diacyl-sn-glycero-3-phospho-(1D-myo-inositol-4,5-bisphosphate) + H2O = 1D-myo-inositol 1,4,5-trisphosphate + a 1,2-diacyl-sn-glycerol + H(+). The catalysed reaction is a 1,2-diacyl-sn-glycero-3-phospho-(1D-myo-inositol) + H2O = 1D-myo-inositol 1-phosphate + a 1,2-diacyl-sn-glycerol + H(+). In terms of biological role, hydrolyzes the phosphatidylinositol 4,5-bisphosphate (PIP2) to generate 2 second messenger molecules diacylglycerol (DAG) and inositol 1,4,5-trisphosphate (IP3). DAG mediates the activation of protein kinase C (PKC), while IP3 releases Ca(2+) from intracellular stores. Required for acrosome reaction in sperm during fertilization, probably by acting as an important enzyme for intracellular Ca(2+) mobilization in the zona pellucida-induced acrosome reaction. May play a role in cell growth. Modulates the liver regeneration in cooperation with nuclear PKC. Overexpression up-regulates the Erk signaling pathway and proliferation. Its function is as follows. Acts as a non-receptor guanine nucleotide exchange factor which binds to and activates guanine nucleotide-binding protein (G-protein) alpha subunit GNAI3. The sequence is that of 1-phosphatidylinositol 4,5-bisphosphate phosphodiesterase delta-4 from Homo sapiens (Human).